A 257-amino-acid chain; its full sequence is UPF0246 protein ACICU_02469 (257 aa).

The protein belongs to the UPF0246 family.

This Acinetobacter baumannii (strain ACICU) protein is UPF0246 protein ACICU_02469.